A 38-amino-acid polypeptide reads, in one-letter code: Photosystem I reaction center subunit VIII (38 aa).

Residues 12-32 (WILIPIIGWLMPAVVMGLLFL) traverse the membrane as a helical segment.

Belongs to the PsaI family.

It is found in the cellular thylakoid membrane. In terms of biological role, may help in the organization of the PsaL subunit. The sequence is that of Photosystem I reaction center subunit VIII from Gloeothece citriformis (strain PCC 7424) (Cyanothece sp. (strain PCC 7424)).